A 345-amino-acid chain; its full sequence is Tropomodulin-4 (345 aa).

Residues 42–63 (NMLLPAGLRQRDQTKKSPTGPL) are disordered.

It belongs to the tropomodulin family. Binds to the N-terminus of tropomyosin and to actin. As to expression, highly expressed in skeletal muscle.

It is found in the cytoplasm. The protein resides in the cytoskeleton. Its function is as follows. Blocks the elongation and depolymerization of the actin filaments at the pointed end. The Tmod/TM complex contributes to the formation of the short actin protofilament, which in turn defines the geometry of the membrane skeleton. The chain is Tropomodulin-4 (TMOD4) from Homo sapiens (Human).